Here is a 301-residue protein sequence, read N- to C-terminus: Probable aspartoacylase (301 aa).

2 residues coordinate Zn(2+): His13 and Glu16. Substrate-binding positions include Arg54 and 61–62; that span reads NR. Residue His105 participates in Zn(2+) binding. Substrate-binding residues include Glu163 and Tyr273.

The protein belongs to the AspA/AstE family. Aspartoacylase subfamily. Zn(2+) serves as cofactor.

It catalyses the reaction an N-acyl-L-aspartate + H2O = a carboxylate + L-aspartate. In Prochlorococcus marinus (strain MIT 9312), this protein is Probable aspartoacylase.